Here is a 311-residue protein sequence, read N- to C-terminus: HTH-type transcriptional regulator PcaQ (311 aa).

An HTH lysR-type domain is found at 6–63 (IKFRHLQTFVEVARQKSVIRAAEILHVSQPAVTKTIRELEDVLGVSLLEREGRGIRIS). The segment at residues 23–42 (VIRAAEILHVSQPAVTKTIR) is a DNA-binding region (H-T-H motif).

The protein belongs to the LysR transcriptional regulatory family.

In terms of biological role, activates transcription of the pcaDCHGB operon for the catabolism of the phenolic compound protocatechuate. In Agrobacterium fabrum (strain C58 / ATCC 33970) (Agrobacterium tumefaciens (strain C58)), this protein is HTH-type transcriptional regulator PcaQ (pcaQ).